The sequence spans 342 residues: S-adenosylmethionine:tRNA ribosyltransferase-isomerase (342 aa).

Belongs to the QueA family. As to quaternary structure, monomer.

Its subcellular location is the cytoplasm. It catalyses the reaction 7-aminomethyl-7-carbaguanosine(34) in tRNA + S-adenosyl-L-methionine = epoxyqueuosine(34) in tRNA + adenine + L-methionine + 2 H(+). It functions in the pathway tRNA modification; tRNA-queuosine biosynthesis. Transfers and isomerizes the ribose moiety from AdoMet to the 7-aminomethyl group of 7-deazaguanine (preQ1-tRNA) to give epoxyqueuosine (oQ-tRNA). The protein is S-adenosylmethionine:tRNA ribosyltransferase-isomerase of Listeria monocytogenes serovar 1/2a (strain ATCC BAA-679 / EGD-e).